A 708-amino-acid chain; its full sequence is Tryptophan synthase (708 aa).

Positions 1-305 (MEGIKQTFQR…EADIDAQLAA (305 aa)) are tryptophan synthase alpha chain. Residues E49 and D60 each act as proton acceptor in the active site. A tryptophan synthase beta chain region spans residues 306 to 708 (LHGTIPKRFG…GPKIGWDLRF (403 aa)). K392 carries the N6-(pyridoxal phosphate)lysine modification.

It in the N-terminal section; belongs to the TrpA family. This sequence in the C-terminal section; belongs to the TrpB family. Pyridoxal 5'-phosphate serves as cofactor.

The enzyme catalyses (1S,2R)-1-C-(indol-3-yl)glycerol 3-phosphate + L-serine = D-glyceraldehyde 3-phosphate + L-tryptophan + H2O. It participates in amino-acid biosynthesis; L-tryptophan biosynthesis; L-tryptophan from chorismate: step 5/5. This is Tryptophan synthase (trp-3) from Neurospora crassa (strain ATCC 24698 / 74-OR23-1A / CBS 708.71 / DSM 1257 / FGSC 987).